The sequence spans 44 residues: Cuticle protein CP463 (44 aa).

2 tandem repeats follow at residues 3–20 (LLEG…KKYL) and 27–44 (VLLS…NVQF).

As to expression, calcified shell.

The polypeptide is Cuticle protein CP463 (Cancer pagurus (Rock crab)).